Consider the following 154-residue polypeptide: Endoribonuclease YbeY (154 aa).

Zn(2+)-binding residues include histidine 117, histidine 121, and histidine 127.

It belongs to the endoribonuclease YbeY family. Zn(2+) serves as cofactor.

Its subcellular location is the cytoplasm. Single strand-specific metallo-endoribonuclease involved in late-stage 70S ribosome quality control and in maturation of the 3' terminus of the 16S rRNA. This Aromatoleum aromaticum (strain DSM 19018 / LMG 30748 / EbN1) (Azoarcus sp. (strain EbN1)) protein is Endoribonuclease YbeY.